A 241-amino-acid polypeptide reads, in one-letter code: DNA repair protein RecO (241 aa).

It belongs to the RecO family.

Its function is as follows. Involved in DNA repair and RecF pathway recombination. This is DNA repair protein RecO from Xanthomonas campestris pv. campestris (strain B100).